The chain runs to 652 residues: Probable protein phosphatase 2C 19 (652 aa).

The PPM-type phosphatase domain occupies 265 to 517; that stretch reads KYVVSSMQGW…DNTTVILVLF (253 aa). Positions 300, 301, 467, and 508 each coordinate Mn(2+). The interval 524-567 is disordered; sequence AVPPVDTDTDTDSHTGDDVDNNDPANEVDPTANAGSDDSNTSDE.

This sequence belongs to the PP2C family. The cofactor is Mg(2+). Requires Mn(2+) as cofactor.

It catalyses the reaction O-phospho-L-seryl-[protein] + H2O = L-seryl-[protein] + phosphate. It carries out the reaction O-phospho-L-threonyl-[protein] + H2O = L-threonyl-[protein] + phosphate. The polypeptide is Probable protein phosphatase 2C 19 (Oryza sativa subsp. japonica (Rice)).